Reading from the N-terminus, the 179-residue chain is Warthog protein 3 (179 aa).

Positions methionine 1–alanine 19 are cleaved as a signal peptide. 2 N-linked (GlcNAc...) asparagine glycosylation sites follow: asparagine 52 and asparagine 147.

In terms of tissue distribution, expressed in the trinucleate pharyngeal gland cell g1, seam cells and hypodermis.

The protein resides in the secreted. Intercellular signal essential for a variety of patterning events during development. The polypeptide is Warthog protein 3 (wrt-3) (Caenorhabditis elegans).